A 93-amino-acid polypeptide reads, in one-letter code: Small ribosomal subunit protein uS19 (93 aa).

The protein belongs to the universal ribosomal protein uS19 family.

In terms of biological role, protein S19 forms a complex with S13 that binds strongly to the 16S ribosomal RNA. The chain is Small ribosomal subunit protein uS19 from Syntrophus aciditrophicus (strain SB).